Here is a 166-residue protein sequence, read N- to C-terminus: Myosin regulatory light chain 2, ventricular/cardiac muscle isoform (166 aa).

Ala-2 bears the N,N,N-trimethylalanine mark. A Deamidated asparagine modification is found at Asn-14. A Phosphoserine; by ZIPK/DAPK3 modification is found at Ser-15. Ser-19 is modified (phosphoserine). EF-hand domains lie at 24–59 (TQIQ…LGRV), 94–129 (DPEE…QAER), and 130–165 (FSKE…GEEK). Ca(2+)-binding residues include Asp-37, Asn-39, Asp-41, and Asp-48. Thr-52 carries the phosphothreonine modification.

In terms of assembly, myosin is a hexamer of 2 heavy chains and 4 light chains. Interacts with MYOC. Post-translationally, N-terminus is methylated by METTL11A/NTM1. In terms of processing, phosphorylated by MYLK3 and MYLK2; promotes cardiac muscle contraction and function. Dephosphorylated by PPP1CB complexed to PPP1R12B. The phosphorylated form in adult is expressed as gradients across the heart from endocardium (low phosphorylation) to epicardium (high phosphorylation); regulates cardiac torsion and workload distribution. As to expression, highly expressed in type I muscle fibers.

It is found in the cytoplasm. Its subcellular location is the myofibril. The protein localises to the sarcomere. It localises to the a band. In terms of biological role, contractile protein that plays a role in heart development and function. Following phosphorylation, plays a role in cross-bridge cycling kinetics and cardiac muscle contraction by increasing myosin lever arm stiffness and promoting myosin head diffusion; as a consequence of the increase in maximum contraction force and calcium sensitivity of contraction force. These events altogether slow down myosin kinetics and prolong duty cycle resulting in accumulated myosins being cooperatively recruited to actin binding sites to sustain thin filament activation as a means to fine-tune myofilament calcium sensitivity to force. During cardiogenesis plays an early role in cardiac contractility by promoting cardiac myofibril assembly. The chain is Myosin regulatory light chain 2, ventricular/cardiac muscle isoform from Homo sapiens (Human).